A 252-amino-acid chain; its full sequence is Agamous-like MADS-box protein AGL6 (252 aa).

The 55-residue stretch at 3-57 (RGRVEMKRIENKINRQVTFSKRRNGLLKKAYELSVLCDAEVALIIFSSRGKLYEF) folds into the MADS-box domain. A K-box domain is found at 86–176 (TQSWCQEVTK…KIKFETEGHA (91 aa)). Residues 91–173 (QEVTKLKSKY…KQLKIKFETE (83 aa)) are a coiled coil.

In terms of assembly, forms a heterodimer with AGAMOUS. Interacts with AGL15 and AGL16. Preferentially expressed in flowers.

It localises to the nucleus. Probable transcription factor. Forms a heterodimer via the K-box domain with AG, that could be involved in genes regulation during floral meristem development. The sequence is that of Agamous-like MADS-box protein AGL6 (AGL6) from Arabidopsis thaliana (Mouse-ear cress).